A 427-amino-acid polypeptide reads, in one-letter code: 3-phosphoshikimate 1-carboxyvinyltransferase (427 aa).

Positions 22, 23, and 27 each coordinate 3-phosphoshikimate. A phosphoenolpyruvate-binding site is contributed by lysine 22. Residues glycine 96 and arginine 124 each coordinate phosphoenolpyruvate. The 3-phosphoshikimate site is built by serine 169, serine 170, glutamine 171, serine 197, aspartate 313, asparagine 336, and lysine 340. Glutamine 171 provides a ligand contact to phosphoenolpyruvate. Aspartate 313 acts as the Proton acceptor in catalysis. Residues arginine 344, arginine 386, and lysine 411 each contribute to the phosphoenolpyruvate site.

It belongs to the EPSP synthase family. As to quaternary structure, monomer.

It localises to the cytoplasm. It catalyses the reaction 3-phosphoshikimate + phosphoenolpyruvate = 5-O-(1-carboxyvinyl)-3-phosphoshikimate + phosphate. It participates in metabolic intermediate biosynthesis; chorismate biosynthesis; chorismate from D-erythrose 4-phosphate and phosphoenolpyruvate: step 6/7. Catalyzes the transfer of the enolpyruvyl moiety of phosphoenolpyruvate (PEP) to the 5-hydroxyl of shikimate-3-phosphate (S3P) to produce enolpyruvyl shikimate-3-phosphate and inorganic phosphate. The sequence is that of 3-phosphoshikimate 1-carboxyvinyltransferase from Salmonella agona (strain SL483).